Here is a 496-residue protein sequence, read N- to C-terminus: Palmitoleoyl-protein carboxylesterase NOTUM (496 aa).

An N-terminal signal peptide occupies residues 1–19 (MGRGVRVLLLLSLLHCAGG). Residues 21–46 (EGRKTWRRRGQQPPPPPRTEAAPAAG) form a disordered region. Ser-81 is modified (phosphoserine; by FAM20C). N-linked (GlcNAc...) asparagine glycosylation occurs at Asn-96. Residues Ser-232, Asp-340, and His-389 each act as charge relay system in the active site.

Belongs to the pectinacetylesterase family. Notum subfamily. As to expression, rarely expressed in adult normal tissues.

It is found in the secreted. The enzyme catalyses [Wnt protein]-O-(9Z)-hexadecenoyl-L-serine + H2O = [Wnt protein]-L-serine + (9Z)-hexadecenoate + H(+). Functionally, carboxylesterase that acts as a key negative regulator of the Wnt signaling pathway by specifically mediating depalmitoleoylation of WNT proteins. Serine palmitoleoylation of WNT proteins is required for efficient binding to frizzled receptors. This chain is Palmitoleoyl-protein carboxylesterase NOTUM, found in Homo sapiens (Human).